Here is a 557-residue protein sequence, read N- to C-terminus: Dihydroxy-acid dehydratase (557 aa).

Aspartate 78 contributes to the Mg(2+) binding site. Cysteine 119 lines the [2Fe-2S] cluster pocket. Positions 120 and 121 each coordinate Mg(2+). Lysine 121 carries the post-translational modification N6-carboxylysine. Cysteine 191 provides a ligand contact to [2Fe-2S] cluster. Glutamate 442 is a Mg(2+) binding site. The active-site Proton acceptor is serine 468.

Belongs to the IlvD/Edd family. As to quaternary structure, homodimer. [2Fe-2S] cluster is required as a cofactor. Mg(2+) serves as cofactor.

The enzyme catalyses (2R)-2,3-dihydroxy-3-methylbutanoate = 3-methyl-2-oxobutanoate + H2O. The catalysed reaction is (2R,3R)-2,3-dihydroxy-3-methylpentanoate = (S)-3-methyl-2-oxopentanoate + H2O. It participates in amino-acid biosynthesis; L-isoleucine biosynthesis; L-isoleucine from 2-oxobutanoate: step 3/4. Its pathway is amino-acid biosynthesis; L-valine biosynthesis; L-valine from pyruvate: step 3/4. Functionally, functions in the biosynthesis of branched-chain amino acids. Catalyzes the dehydration of (2R,3R)-2,3-dihydroxy-3-methylpentanoate (2,3-dihydroxy-3-methylvalerate) into 2-oxo-3-methylpentanoate (2-oxo-3-methylvalerate) and of (2R)-2,3-dihydroxy-3-methylbutanoate (2,3-dihydroxyisovalerate) into 2-oxo-3-methylbutanoate (2-oxoisovalerate), the penultimate precursor to L-isoleucine and L-valine, respectively. The chain is Dihydroxy-acid dehydratase from Syntrophobacter fumaroxidans (strain DSM 10017 / MPOB).